Reading from the N-terminus, the 96-residue chain is Small ribosomal subunit protein bS6 (96 aa).

This sequence belongs to the bacterial ribosomal protein bS6 family.

Functionally, binds together with bS18 to 16S ribosomal RNA. This Beutenbergia cavernae (strain ATCC BAA-8 / DSM 12333 / CCUG 43141 / JCM 11478 / NBRC 16432 / NCIMB 13614 / HKI 0122) protein is Small ribosomal subunit protein bS6.